The primary structure comprises 340 residues: N-acetyl-gamma-glutamyl-phosphate reductase (340 aa).

Cysteine 146 is an active-site residue.

It belongs to the NAGSA dehydrogenase family. Type 1 subfamily.

It localises to the cytoplasm. It carries out the reaction N-acetyl-L-glutamate 5-semialdehyde + phosphate + NADP(+) = N-acetyl-L-glutamyl 5-phosphate + NADPH + H(+). It functions in the pathway amino-acid biosynthesis; L-arginine biosynthesis; N(2)-acetyl-L-ornithine from L-glutamate: step 3/4. Its function is as follows. Catalyzes the NADPH-dependent reduction of N-acetyl-5-glutamyl phosphate to yield N-acetyl-L-glutamate 5-semialdehyde. This chain is N-acetyl-gamma-glutamyl-phosphate reductase, found in Streptococcus thermophilus (strain CNRZ 1066).